Here is a 105-residue protein sequence, read N- to C-terminus: uncharacterized protein (105 aa).

Positions 22–105 (GSAGHGATEA…KKRIIKGKVM (84 aa)) are disordered. Residues 61 to 83 (HDSRPARGDARKRHCQENNKTDR) are compositionally biased toward basic and acidic residues. A compositionally biased stretch (basic residues) spans 93–105 (NRRKKRIIKGKVM).

This is an uncharacterized protein from Escherichia coli (strain K12).